The following is a 281-amino-acid chain: MASLKFTKMEGIGNDYVYIDSTRNDIRLTPEQIQKISDRNFGIGSDGVIFIRNSKQGDFMMDMYNSDGSSSEMCGNGIRCVAKYIYDHGLTSSKNPKIETGAGILEVDLKIGSGNKVDLVSVDMGKPVLVPSQIPVVWKNEETIIDQPLEIGDKNLKFTAVSMGNPHCVIFVDDSDEFPVRGIGPLIERHSIFPKRVNVEFVTIRGKDHLYQRTWERGAGETLACGTGACAVMVAGNLTGRSGKDVQIDLRGGTLRIQWQESGNILMTGPAREIFSGEIEI.

Residues N14 and N65 each contribute to the substrate site. C74 acts as the Proton donor in catalysis. Substrate contacts are provided by residues 75 to 76 (GN), N165, N198, and 216 to 217 (ER). C225 functions as the Proton acceptor in the catalytic mechanism. 226–227 (GT) is a substrate binding site.

The protein belongs to the diaminopimelate epimerase family. As to quaternary structure, homodimer.

Its subcellular location is the cytoplasm. It catalyses the reaction (2S,6S)-2,6-diaminopimelate = meso-2,6-diaminopimelate. It functions in the pathway amino-acid biosynthesis; L-lysine biosynthesis via DAP pathway; DL-2,6-diaminopimelate from LL-2,6-diaminopimelate: step 1/1. Functionally, catalyzes the stereoinversion of LL-2,6-diaminopimelate (L,L-DAP) to meso-diaminopimelate (meso-DAP), a precursor of L-lysine and an essential component of the bacterial peptidoglycan. The polypeptide is Diaminopimelate epimerase (Leptospira interrogans serogroup Icterohaemorrhagiae serovar copenhageni (strain Fiocruz L1-130)).